We begin with the raw amino-acid sequence, 195 residues long: Peptidyl-tRNA hydrolase (195 aa).

Tyr-18 contributes to the tRNA binding site. His-23 functions as the Proton acceptor in the catalytic mechanism. Residues Phe-69, Asn-71, and Asn-117 each contribute to the tRNA site.

Belongs to the PTH family. As to quaternary structure, monomer.

The protein localises to the cytoplasm. It catalyses the reaction an N-acyl-L-alpha-aminoacyl-tRNA + H2O = an N-acyl-L-amino acid + a tRNA + H(+). Its function is as follows. Hydrolyzes ribosome-free peptidyl-tRNAs (with 1 or more amino acids incorporated), which drop off the ribosome during protein synthesis, or as a result of ribosome stalling. Catalyzes the release of premature peptidyl moieties from peptidyl-tRNA molecules trapped in stalled 50S ribosomal subunits, and thus maintains levels of free tRNAs and 50S ribosomes. This chain is Peptidyl-tRNA hydrolase, found in Hahella chejuensis (strain KCTC 2396).